We begin with the raw amino-acid sequence, 472 residues long: Glutamate--tRNA ligase 1 (472 aa).

Positions 13–23 match the 'HIGH' region motif; sequence PSPTGYLHIGG. Zn(2+)-binding residues include cysteine 102, cysteine 104, cysteine 129, and glutamate 131. Residues 239 to 243 carry the 'KMSKS' region motif; sequence RLSKR. Position 242 (lysine 242) interacts with ATP.

It belongs to the class-I aminoacyl-tRNA synthetase family. Glutamate--tRNA ligase type 1 subfamily. Monomer. Zn(2+) is required as a cofactor.

The protein localises to the cytoplasm. It carries out the reaction tRNA(Glu) + L-glutamate + ATP = L-glutamyl-tRNA(Glu) + AMP + diphosphate. Functionally, catalyzes the attachment of glutamate to tRNA(Glu) in a two-step reaction: glutamate is first activated by ATP to form Glu-AMP and then transferred to the acceptor end of tRNA(Glu). The sequence is that of Glutamate--tRNA ligase 1 from Syntrophus aciditrophicus (strain SB).